Here is a 746-residue protein sequence, read N- to C-terminus: Probable ubiquitin carboxyl-terminal hydrolase MINDY-4 (746 aa).

Disordered regions lie at residues 123–179 (DDET…SEGE), 198–254 (MALG…IKGE), and 319–342 (GKGATEASPYASNEHRRRSGFSNM). 2 stretches are compositionally biased toward polar residues: residues 141 to 152 (YRSQNDLQFNKS) and 165 to 174 (TEAGVTSTGV). Catalysis depends on cysteine 448, which acts as the Nucleophile. Histidine 666 acts as the Proton acceptor in catalysis.

This sequence belongs to the MINDY deubiquitinase family. FAM188 subfamily.

The enzyme catalyses Thiol-dependent hydrolysis of ester, thioester, amide, peptide and isopeptide bonds formed by the C-terminal Gly of ubiquitin (a 76-residue protein attached to proteins as an intracellular targeting signal).. In terms of biological role, probable hydrolase that can remove 'Lys-48'-linked conjugated ubiquitin from proteins. The polypeptide is Probable ubiquitin carboxyl-terminal hydrolase MINDY-4 (mindy4) (Xenopus tropicalis (Western clawed frog)).